The primary structure comprises 61 residues: uncharacterized protein (61 aa).

The next 2 helical transmembrane spans lie at 7–24 and 29–48; these read FNVFCIVALGSIYGYKLF and VSTTRLIIASVIVLWNIVGL.

The protein resides in the cell membrane. This is an uncharacterized protein from Bacillus subtilis (strain 168).